Here is a 643-residue protein sequence, read N- to C-terminus: Transducer protein Htr8 (643 aa).

The next 5 helical transmembrane spans lie at 48 to 68 (VFVLAHIPLLLALGLYEGTES), 79 to 99 (PGILIAAELGIVGALVGLASI), 115 to 134 (VLASSVVLVQFSGGFIEAHF), 149 to 169 (WLPFALGLVYVVFTHGVFGMI), and 184 to 204 (PWVWGGIHGAFVLLLAGALMA). Residues 273-326 (ERLEATANTYGAAMARAADGDLSVRLDPDVENDAMAAIAASFNEMLDETETTIR) enclose the HAMP domain. Residues 345 to 581 (GVVEIEDASG…EAVSMIAEVS (237 aa)) enclose the Methyl-accepting transducer domain.

It belongs to the methyl-accepting chemotaxis (MCP) protein family. Post-translationally, methylated by CheR.

It is found in the cell membrane. Functionally, potentially involved in chemo- or phototactic signal transduction. This Halobacterium salinarum (strain ATCC 29341 / DSM 671 / R1) protein is Transducer protein Htr8 (htr8).